A 224-amino-acid polypeptide reads, in one-letter code: Heme response regulator HssR (224 aa).

One can recognise a Response regulatory domain in the interval 3–116 (QCLVVDDDSR…ELIFRIRAVL (114 aa)). Asp52 carries the post-translational modification 4-aspartylphosphate. Residues 124 to 222 (NSEMTIGNLT…VRGQGYKVEN (99 aa)) constitute a DNA-binding region (ompR/PhoB-type).

Post-translationally, phosphorylated by HssS.

It localises to the cytoplasm. In terms of biological role, member of the two-component regulatory system HssS/HssR involved in intracellular heme homeostasis and tempering of staphylococcal virulence. Phosphorylated HssR binds to a direct repeat sequence within hrtAB promoter and activates the expression of hrtAB, an efflux pump, in response to extracellular heme, hemin, hemoglobin or blood. The chain is Heme response regulator HssR (hssR) from Staphylococcus aureus (strain bovine RF122 / ET3-1).